Reading from the N-terminus, the 267-residue chain is Putative metal-binding protein TM_0123 (267 aa).

An N-terminal signal peptide occupies residues 1–15; that stretch reads MKKILLLLVLIVAVL. A divalent metal cation-binding residues include His53, His107, and His172.

It belongs to the bacterial solute-binding protein 9 family.

The protein localises to the periplasm. Functionally, part of an ATP-binding cassette (ABC) transport system involved in metal import. Binds a metal with high affinity and specificity and delivers it to the membrane permease for translocation into the cytoplasm. This Thermotoga maritima (strain ATCC 43589 / DSM 3109 / JCM 10099 / NBRC 100826 / MSB8) protein is Putative metal-binding protein TM_0123.